The chain runs to 1592 residues: Probable serine/threonine-protein kinase DDB_G0293958 (1592 aa).

The region spanning 1–302 is the Protein kinase 1 domain; that stretch reads MTGFEIFKKK…CLNYLKEKLI (302 aa). Residues 2 to 10 and Lys43 each bind ATP; that span reads TGFEIFKKK. Asp158 acts as the Proton acceptor in catalysis. Disordered regions lie at residues 348–402, 455–526, and 837–867; these read INNN…NNNN, FNDI…SNYN, and KNNN…NDKS. Low complexity predominate over residues 349–402; sequence NNNNNNNNNNNNNNNNNNNNNNNNNNNNNNNNNNNNNNNNNNNNNNNNNNNNNN. A coiled-coil region spans residues 461–518; the sequence is STTGEEEEEEKKDNLKRQNENNQIEQEDKGEKHLKETLNNNNNNNNNNNNNNNNNNNN. Over residues 486–496 the composition is skewed to basic and acidic residues; it reads QEDKGEKHLKE. 2 stretches are compositionally biased toward low complexity: residues 499–526 and 837–864; these read NNNN…SNYN and KNNN…NNSN. The region spanning 1342-1592 is the Protein kinase 2 domain; it reads LGTYNLIGDS…KELIECLNKL (251 aa). ATP is bound by residues 1348–1356 and Lys1376; that span reads IGDSVFRNI. The Proton acceptor role is filled by Asp1474.

This sequence belongs to the protein kinase superfamily. Ser/Thr protein kinase family.

The enzyme catalyses L-seryl-[protein] + ATP = O-phospho-L-seryl-[protein] + ADP + H(+). The catalysed reaction is L-threonyl-[protein] + ATP = O-phospho-L-threonyl-[protein] + ADP + H(+). The sequence is that of Probable serine/threonine-protein kinase DDB_G0293958 from Dictyostelium discoideum (Social amoeba).